A 179-amino-acid chain; its full sequence is Large ribosomal subunit protein uL6 (179 aa).

Belongs to the universal ribosomal protein uL6 family. As to quaternary structure, part of the 50S ribosomal subunit.

This protein binds to the 23S rRNA, and is important in its secondary structure. It is located near the subunit interface in the base of the L7/L12 stalk, and near the tRNA binding site of the peptidyltransferase center. In Rippkaea orientalis (strain PCC 8801 / RF-1) (Cyanothece sp. (strain PCC 8801)), this protein is Large ribosomal subunit protein uL6.